A 177-amino-acid polypeptide reads, in one-letter code: Ferritin heavy chain, oocyte isoform (177 aa).

A Ferritin-like diiron domain is found at 7 to 156 (QNFHQECEAA…DHITNLRRMG (150 aa)). Positions 24, 59, 62, 104, and 138 each coordinate Fe cation.

It belongs to the ferritin family. In terms of assembly, oligomer of 24 subunits. There are two types of subunits: L (light) chain and H (heavy) chain. The functional molecule is roughly spherical and contains a central cavity into which the insoluble mineral iron core is deposited.

Its subcellular location is the cytoplasm. It carries out the reaction 4 Fe(2+) + O2 + 4 H(+) = 4 Fe(3+) + 2 H2O. Functionally, stores iron in a soluble, non-toxic, readily available form. Important for iron homeostasis. Has ferroxidase activity. Iron is taken up in the ferrous form and deposited as ferric hydroxides after oxidation. The chain is Ferritin heavy chain, oocyte isoform from Xenopus laevis (African clawed frog).